An 866-amino-acid polypeptide reads, in one-letter code: Sphingomyelin phosphodiesterase 4 (866 aa).

Serine 169 and serine 285 each carry phosphoserine. Residue threonine 708 is modified to Phosphothreonine. Serine 792 is modified (phosphoserine). Residues 822–842 (LLLAFFVASLFCVGPLPCTLL) traverse the membrane as a helical segment.

It depends on Mg(2+) as a cofactor. As to expression, widely expressed, with highest levels in heart and skeletal muscle. In terms of tissue distribution, expressed in skeletal muscle (at protein level). Expressed in skeletal muscle but a lower levels than isoform 1 (at protein level).

It is found in the endoplasmic reticulum membrane. The protein localises to the golgi apparatus membrane. It localises to the nucleus envelope. The protein resides in the cell membrane. Its subcellular location is the sarcolemma. The catalysed reaction is a sphingomyelin + H2O = phosphocholine + an N-acylsphing-4-enine + H(+). Activated by phosphatidylserine and tumor necrosis factor (TNF). Inhibited by scyphostatin. Its function is as follows. Catalyzes the hydrolysis of membrane sphingomyelin to form phosphorylcholine and ceramide. It has a relevant role in the homeostasis of membrane sphingolipids, thereby influencing membrane integrity, and endoplasmic reticulum organization and function. May sensitize cells to DNA damage-induced apoptosis. In skeletal muscle, mediates TNF-stimulated oxidant production. This Homo sapiens (Human) protein is Sphingomyelin phosphodiesterase 4.